Reading from the N-terminus, the 284-residue chain is Bifunctional protein FolD (284 aa).

NADP(+) contacts are provided by residues 166-168 (GRS) and Ser-191.

This sequence belongs to the tetrahydrofolate dehydrogenase/cyclohydrolase family. Homodimer.

The enzyme catalyses (6R)-5,10-methylene-5,6,7,8-tetrahydrofolate + NADP(+) = (6R)-5,10-methenyltetrahydrofolate + NADPH. The catalysed reaction is (6R)-5,10-methenyltetrahydrofolate + H2O = (6R)-10-formyltetrahydrofolate + H(+). The protein operates within one-carbon metabolism; tetrahydrofolate interconversion. Catalyzes the oxidation of 5,10-methylenetetrahydrofolate to 5,10-methenyltetrahydrofolate and then the hydrolysis of 5,10-methenyltetrahydrofolate to 10-formyltetrahydrofolate. The polypeptide is Bifunctional protein FolD (Leptospira borgpetersenii serovar Hardjo-bovis (strain JB197)).